Consider the following 325-residue polypeptide: DNA repair and recombination protein RadA (325 aa).

107–114 (GEFGSGKT) contacts ATP.

The protein belongs to the eukaryotic RecA-like protein family.

Its function is as follows. Involved in DNA repair and in homologous recombination. Binds and assemble on single-stranded DNA to form a nucleoprotein filament. Hydrolyzes ATP in a ssDNA-dependent manner and promotes DNA strand exchange between homologous DNA molecules. The chain is DNA repair and recombination protein RadA from Methanococcoides burtonii (strain DSM 6242 / NBRC 107633 / OCM 468 / ACE-M).